The following is a 492-amino-acid chain: Glutamate--tRNA ligase (492 aa).

Positions P13–M23 match the 'HIGH' region motif. The short motif at K257–R261 is the 'KMSKS' region element. Residue K260 participates in ATP binding.

It belongs to the class-I aminoacyl-tRNA synthetase family. Glutamate--tRNA ligase type 1 subfamily. Monomer.

Its subcellular location is the cytoplasm. The catalysed reaction is tRNA(Glu) + L-glutamate + ATP = L-glutamyl-tRNA(Glu) + AMP + diphosphate. Its function is as follows. Catalyzes the attachment of glutamate to tRNA(Glu) in a two-step reaction: glutamate is first activated by ATP to form Glu-AMP and then transferred to the acceptor end of tRNA(Glu). This chain is Glutamate--tRNA ligase, found in Mycolicibacterium paratuberculosis (strain ATCC BAA-968 / K-10) (Mycobacterium paratuberculosis).